The primary structure comprises 213 residues: Adenylate kinase (213 aa).

Position 10 to 15 (10 to 15) interacts with ATP; that stretch reads GCGKGT. The interval 30–59 is NMP; the sequence is STGDLMRKEISLNTRLGLKCQEYMNAGKYV. Residues Thr31, Arg36, 57 to 59, 83 to 86, and Gln90 each bind AMP; these read KYV and GYPR. An LID region spans residues 124–161; it reads NRLVCPLCKASFNLETRKPKQEGLCDFDNTKLVKRSDD. Arg125 contacts ATP. Zn(2+)-binding residues include Cys128 and Cys131. Residue 134 to 135 participates in ATP binding; that stretch reads SF. Residues Cys148 and Asp151 each contribute to the Zn(2+) site. Residues Arg158 and Arg169 each coordinate AMP. Asp197 contacts ATP.

The protein belongs to the adenylate kinase family. Monomer.

It localises to the cytoplasm. It carries out the reaction AMP + ATP = 2 ADP. The protein operates within purine metabolism; AMP biosynthesis via salvage pathway; AMP from ADP: step 1/1. Its function is as follows. Catalyzes the reversible transfer of the terminal phosphate group between ATP and AMP. Plays an important role in cellular energy homeostasis and in adenine nucleotide metabolism. This chain is Adenylate kinase, found in Mycoplasma mycoides subsp. mycoides SC (strain CCUG 32753 / NCTC 10114 / PG1).